The following is a 302-amino-acid chain: D-alanine--D-alanine ligase (302 aa).

Positions 104-296 (KLVFERFAIP…FPDLVTWLVE (193 aa)) constitute an ATP-grasp domain. 130–183 (AMARPYVVKPLDQGSSVGVTIVTSETNDLPFSRDDWPYGRQVMVERFIPGRELT) is an ATP binding site. Mg(2+)-binding residues include Asp-251, Glu-263, and Asn-265.

This sequence belongs to the D-alanine--D-alanine ligase family. It depends on Mg(2+) as a cofactor. Mn(2+) serves as cofactor.

The protein resides in the cytoplasm. The catalysed reaction is 2 D-alanine + ATP = D-alanyl-D-alanine + ADP + phosphate + H(+). It participates in cell wall biogenesis; peptidoglycan biosynthesis. Functionally, cell wall formation. The chain is D-alanine--D-alanine ligase from Rhodospirillum rubrum (strain ATCC 11170 / ATH 1.1.1 / DSM 467 / LMG 4362 / NCIMB 8255 / S1).